We begin with the raw amino-acid sequence, 431 residues long: Glucose-1-phosphate adenylyltransferase (431 aa).

Lys39 is a binding site for beta-D-fructose 1,6-bisphosphate. Arg40, His46, and Arg52 together coordinate AMP. Tyr114 contributes to the alpha-D-glucose 1-phosphate binding site. Arg130 is a binding site for AMP. Alpha-D-glucose 1-phosphate contacts are provided by residues Gly179, 194–195 (EK), and Ser212. Residue Arg386 participates in AMP binding. Beta-D-fructose 1,6-bisphosphate contacts are provided by residues 419 to 423 (REMLR) and 429 to 431 (QER).

It belongs to the bacterial/plant glucose-1-phosphate adenylyltransferase family. As to quaternary structure, homotetramer.

The catalysed reaction is alpha-D-glucose 1-phosphate + ATP + H(+) = ADP-alpha-D-glucose + diphosphate. The protein operates within glycan biosynthesis; glycogen biosynthesis. Its activity is regulated as follows. Allosterically activated by fructose-1,6-bisphosphate (F16BP) and inhibited by AMP. In terms of biological role, involved in the biosynthesis of ADP-glucose, a building block required for the elongation reactions to produce glycogen. Catalyzes the reaction between ATP and alpha-D-glucose 1-phosphate (G1P) to produce pyrophosphate and ADP-Glc. This chain is Glucose-1-phosphate adenylyltransferase, found in Enterobacter sp. (strain 638).